We begin with the raw amino-acid sequence, 497 residues long: Signal recognition particle receptor FtsY (497 aa).

Disordered regions lie at residues 1 to 63 (MAKE…TEAE) and 79 to 130 (AESE…EWQA). Low complexity predominate over residues 87-96 (EAEVVAQPEP). GTP contacts are provided by residues 300 to 307 (GVNGVGKT), 382 to 386 (DTAGR), and 446 to 449 (TKLD).

This sequence belongs to the GTP-binding SRP family. FtsY subfamily. Part of the signal recognition particle protein translocation system, which is composed of SRP and FtsY. SRP is a ribonucleoprotein composed of Ffh and a 4.5S RNA molecule. Binds to SecY. Proteolytically cleaved. The cleavage may regulate function and subcellular location of FtsY. Full-length FtsY is found primarily associated with the membrane, while cleaved protein is predominantly present in the cytoplasm.

The protein resides in the cell inner membrane. It localises to the cytoplasm. It catalyses the reaction GTP + H2O = GDP + phosphate + H(+). Conformation of the Ffh-FtsY complex and regulation of its GTPase activity are modulated by the 4.5S RNA. Formation of the FfH-FtsY complex leads to a mutual stimulation of both GTPases. Involved in targeting and insertion of nascent membrane proteins into the cytoplasmic membrane. Acts as a receptor for the complex formed by the signal recognition particle (SRP) and the ribosome-nascent chain (RNC). Interaction with SRP-RNC leads to the transfer of the RNC complex to the Sec translocase for insertion into the membrane, the hydrolysis of GTP by both Ffh and FtsY, and the dissociation of the SRP-FtsY complex into the individual components. The protein is Signal recognition particle receptor FtsY of Escherichia coli (strain K12).